A 190-amino-acid chain; its full sequence is Endo-1,4-beta-xylanase (190 aa).

Residues 1–190 enclose the GH11 domain; that stretch reads QTIGPGTGYS…SSGSASITVS (190 aa). Glu86 acts as the Nucleophile in catalysis. Residue Glu177 is the Proton donor of the active site.

This sequence belongs to the glycosyl hydrolase 11 (cellulase G) family.

The enzyme catalyses Endohydrolysis of (1-&gt;4)-beta-D-xylosidic linkages in xylans.. It functions in the pathway glycan degradation; xylan degradation. The chain is Endo-1,4-beta-xylanase from Trichoderma harzianum (Hypocrea lixii).